Here is a 527-residue protein sequence, read N- to C-terminus: Splicing factor MUD2 (527 aa).

Residues 36 to 169 (DNAVIDTHFK…SKFNGDRDKR (134 aa)) form a disordered region. Positions 42 to 55 (THFKRQKSDGELPK) are enriched in basic and acidic residues. At S49 the chain carries Phosphoserine. Residues 60-85 (RNVSHSNNRGPSSIITMSTNRTTYEQ) show a composition bias toward polar residues. The span at 94–109 (SYRDASGRSYNRENRY) shows a compositional bias: basic and acidic residues. The span at 110–122 (SSHNTGPQWNNNP) shows a compositional bias: polar residues. Basic and acidic residues-rich tracts occupy residues 125 to 141 (RQRD…DRRG) and 155 to 169 (RKNE…RDKR). The RRM domain occupies 424–511 (LLLLNCLDPL…QFNDRTVLCT (88 aa)).

As to quaternary structure, MSL5, MUD2 and PRP40 interact to form the commitment complex 2 (CC2), a precursor of mature spliceosomes.

Splicing factor that contacts pre-mRNA directly and is a component of the pre-mRNA-U1 snRNP complex (commitment complex 2) that forms during early spliceosome assembly in yeast extracts. The sequence is that of Splicing factor MUD2 (MUD2) from Saccharomyces cerevisiae (strain ATCC 204508 / S288c) (Baker's yeast).